The primary structure comprises 503 residues: Cytochrome P450 3A43 (503 aa).

Cys-442 provides a ligand contact to heme.

It belongs to the cytochrome P450 family. It depends on heme as a cofactor. In terms of tissue distribution, highest expression level in prostate. Also expressed in liver, kidney, pancreas, fetal liver and fetal skeletal muscle.

The protein resides in the endoplasmic reticulum membrane. Its subcellular location is the microsome membrane. It carries out the reaction an organic molecule + reduced [NADPH--hemoprotein reductase] + O2 = an alcohol + oxidized [NADPH--hemoprotein reductase] + H2O + H(+). Exhibits low testosterone 6-beta-hydroxylase activity. This is Cytochrome P450 3A43 (CYP3A43) from Homo sapiens (Human).